Reading from the N-terminus, the 986-residue chain is Leucine-rich repeat receptor-like kinase protein HAR1 (986 aa).

Positions 1–25 are cleaved as a signal peptide; the sequence is MRIRVSYLLVLCFTLIWFRWTVVYS. LRR repeat units lie at residues 71–97, 98–121, 123–145, 146–170, 171–196, 198–218, 243–267, 268–291, 293–314, 316–339, 340–363, 365–387, 388–411, 412–435, 437–458, 459–482, 483–506, 508–530, 531–554, 555–578, and 579–603; these read DQNL…IGLL, EKLE…LASL, SLKV…ITVG, MTEL…IVKL, EKLK…EFQS, EFLG…LAKL, MENL…LGNL, TKLH…LSSM, SLMS…SFSK, KNLT…IGDL, PNLE…LGGN, RFLY…LCKS, GRLK…IGEC, RSLT…VFQL, SVTI…VISG, ESLG…MKNL, RALQ…VFEI, MLTK…ITHR, ASLT…MKNL, MDLS…IRFM, and TSLT…QFLV. N-linked (GlcNAc...) asparagine glycans are attached at residues asparagine 80, asparagine 102, asparagine 109, asparagine 128, and asparagine 141. N-linked (GlcNAc...) asparagine glycans are attached at residues asparagine 255, asparagine 266, and asparagine 279. Residues asparagine 317 and asparagine 351 are each glycosylated (N-linked (GlcNAc...) asparagine). N-linked (GlcNAc...) asparagine glycosylation is found at asparagine 513 and asparagine 518. Asparagine 561 and asparagine 590 each carry an N-linked (GlcNAc...) asparagine glycan. Residues 645-665 form a helical membrane-spanning segment; sequence IVIGIALATAVLLVAVTVHVV. Positions 695-971 constitute a Protein kinase domain; sequence LKEENIIGKG…TMREVVHMLT (277 aa). ATP is bound by residues 701–709 and lysine 723; that span reads IGKGGAGIV. Aspartate 820 serves as the catalytic Proton acceptor.

Belongs to the protein kinase superfamily. Ser/Thr protein kinase family. In terms of tissue distribution, expressed in roots, leaves, stems and flowers.

Its subcellular location is the cell membrane. The enzyme catalyses L-seryl-[protein] + ATP = O-phospho-L-seryl-[protein] + ADP + H(+). It carries out the reaction L-threonyl-[protein] + ATP = O-phospho-L-threonyl-[protein] + ADP + H(+). LRR receptor kinase involved in the regulation of root and shoot growth, and root nodule organogenesis. Involved in long distance nodulation signaling events. Involved in the autoregulation of nodulation (AON), a long distance systemic signaling from root to shoot and back again, which allows legumes to limit the number of root nodules formed based on available nitrogen and previous rhizobial colonization. Acts from shoot to root to control AON. Involved in the regulation of root colonization by arbuscular mycorrhizal (AM) fungi. In Lotus japonicus (Lotus corniculatus var. japonicus), this protein is Leucine-rich repeat receptor-like kinase protein HAR1.